The sequence spans 498 residues: ATP synthase subunit beta, chloroplastic (498 aa).

172-179 (GGAGVGKT) contacts ATP.

This sequence belongs to the ATPase alpha/beta chains family. As to quaternary structure, F-type ATPases have 2 components, CF(1) - the catalytic core - and CF(0) - the membrane proton channel. CF(1) has five subunits: alpha(3), beta(3), gamma(1), delta(1), epsilon(1). CF(0) has four main subunits: a(1), b(1), b'(1) and c(9-12).

It is found in the plastid. It localises to the chloroplast thylakoid membrane. It catalyses the reaction ATP + H2O + 4 H(+)(in) = ADP + phosphate + 5 H(+)(out). In terms of biological role, produces ATP from ADP in the presence of a proton gradient across the membrane. The catalytic sites are hosted primarily by the beta subunits. The sequence is that of ATP synthase subunit beta, chloroplastic from Aspidistra elatior (Cast-iron plant).